The sequence spans 882 residues: Cadherin-1 (882 aa).

Positions 1–22 are cleaved as a signal peptide; the sequence is MGPWSRSLSALLLLLQVSSWLC. Residues 23–154 constitute a propeptide that is removed on maturation; sequence QEPEPCHPGF…SSSGLRRRKR (132 aa). A glycan (N-linked (GlcNAc...) asparagine) is linked at Asn-144. 5 consecutive Cadherin domains span residues 155–262, 263–375, 376–486, 487–593, and 594–697; these read DWVI…KPEF, TQEV…PPVF, NPTT…APIF, VPPE…DNAP, and IPEP…VCKK. Residues 155 to 709 lie on the Extracellular side of the membrane; sequence DWVIPPISCP…PIEAGLQIPA (555 aa). A Ca(2+)-binding site is contributed by Asp-257. Ser-280 is a glycosylation site (O-linked (Man...) serine). Residue Thr-285 is glycosylated (O-linked (Man...) threonine). Asp-288 provides a ligand contact to Ca(2+). O-linked (Man...) threonine glycosylation is found at Thr-358, Thr-470, Thr-472, and Thr-509. N-linked (GlcNAc...) asparagine glycosylation occurs at Asn-558. 3 O-linked (Man...) threonine glycosylation sites follow: Thr-576, Thr-578, and Thr-580. A glycan (N-linked (GlcNAc...) asparagine) is linked at Asn-637. The helical transmembrane segment at 710–730 threads the bilayer; sequence ILGILGGILALLILILLLLLF. Over 731 to 882 the chain is Cytoplasmic; that stretch reads LRRRAVVKEP…ADMYGGGEDD (152 aa). A disordered region spans residues 747 to 767; sequence DTRDNVYYYDEEGGGEEDQDF. Residues Tyr-753, Tyr-754, and Tyr-755 each carry the phosphotyrosine; by SRC modification. Positions 755–767 are enriched in acidic residues; sequence YDEEGGGEEDQDF. Residues 758 to 769 are required for binding CTNND1 and PSEN1; the sequence is EGGGEEDQDFDL. Phosphoserine occurs at positions 770, 793, 838, 840, and 846. Residues 811–882 are required for binding alpha, beta and gamma catenins; it reads IDENLKAADT…ADMYGGGEDD (72 aa).

In terms of assembly, homodimer; disulfide-linked. Component of an E-cadherin/ catenin adhesion complex composed of at least E-cadherin/CDH1, beta-catenin/CTNNB1 or gamma-catenin/JUP, and potentially alpha-catenin/CTNNA1; the complex is located to adherens junctions. Found in a complex composed of CDH1, RAP1A and PKP3; PKP3 acts as a scaffold protein within the complex, the complex is required for CDH1 localization to mature desmosome cell junctions. Interacts with the TRPV4 and CTNNB1 complex. Interacts with CTNND1. The stable association of CTNNA1 is controversial as CTNNA1 was shown not to bind to F-actin when assembled in the complex. Alternatively, the CTNNA1-containing complex may be linked to F-actin by other proteins such as LIMA1. Interaction with PSEN1, cleaves CDH1 resulting in the disassociation of cadherin-based adherens junctions (CAJs). Interacts with AJAP1 and DLGAP5. Interacts with TBC1D2. Interacts with LIMA1. Interacts with CAV1. Interacts with PIP5K1C. Interacts with RAB8B. Interacts with DDR1; this stabilizes CDH1 at the cell surface and inhibits its internalization. Interacts with RAPGEF2. Interacts with KLRG1. Forms a ternary complex composed of ADAM10, CADH1 and EPHA4; within the complex, CADH1 is cleaved by ADAM10 which disrupts adherens junctions. Interacts with SPEF1. Interacts with CTNNB1 and PKP2. Interacts with AMOTL2; the interaction may facilitate binding of radial actin fibers to cell junction complexes. Interacts with DSG3; the interaction is required for CDH1 localization to developing adherens junctions. During apoptosis or with calcium influx, cleaved by a membrane-bound metalloproteinase (ADAM10), PS1/gamma-secretase and caspase-3. Processing by the metalloproteinase, induced by calcium influx, causes disruption of cell-cell adhesion and the subsequent release of beta-catenin into the cytoplasm. The residual membrane-tethered cleavage product is rapidly degraded via an intracellular proteolytic pathway. Cleavage by caspase-3 releases the cytoplasmic tail resulting in disintegration of the actin microfilament system. The gamma-secretase-mediated cleavage promotes disassembly of adherens junctions. During development of the cochlear organ of Corti, cleavage by ADAM10 at adherens junctions promotes pillar cell separation. Post-translationally, N-glycosylation at Asn-637 is essential for expression, folding and trafficking. Addition of bisecting N-acetylglucosamine by MGAT3 modulates its cell membrane location. In terms of processing, ubiquitinated by a SCF complex containing SKP2, which requires prior phosphorylation by CK1/CSNK1A1. Ubiquitinated by CBLL1/HAKAI, requires prior phosphorylation at Tyr-754. O-glycosylated. O-manosylated by TMTC1, TMTC2, TMTC3 or TMTC4. Thr-285 and Thr-509 are O-mannosylated by TMTC2 or TMTC4 but not TMTC1 or TMTC3.

It localises to the cell junction. Its subcellular location is the adherens junction. It is found in the cell membrane. The protein localises to the endosome. The protein resides in the golgi apparatus. It localises to the trans-Golgi network. Its subcellular location is the cytoplasm. It is found in the desmosome. Its function is as follows. Cadherins are calcium-dependent cell adhesion proteins. They preferentially interact with themselves in a homophilic manner in connecting cells; cadherins may thus contribute to the sorting of heterogeneous cell types. CDH1 is involved in mechanisms regulating cell-cell adhesions, mobility and proliferation of epithelial cells. Promotes organization of radial actin fiber structure and cellular response to contractile forces, via its interaction with AMOTL2 which facilitates anchoring of radial actin fibers to CDH1 junction complexes at the cell membrane. Plays a role in the early stages of desmosome cell-cell junction formation via facilitating the recruitment of DSG2 and DSP to desmosome plaques. Has a potent invasive suppressor role. It is a ligand for integrin alpha-E/beta-7. Functionally, E-Cad/CTF2 promotes non-amyloidogenic degradation of Abeta precursors. Has a strong inhibitory effect on APP C99 and C83 production. In Pongo abelii (Sumatran orangutan), this protein is Cadherin-1 (CDH1).